We begin with the raw amino-acid sequence, 189 residues long: uncharacterized protein (189 aa).

It to M.jannaschii MJ1461.

This is an uncharacterized protein from Methanocaldococcus jannaschii (strain ATCC 43067 / DSM 2661 / JAL-1 / JCM 10045 / NBRC 100440) (Methanococcus jannaschii).